Reading from the N-terminus, the 294-residue chain is Nucleotide-binding protein CA_C0511 (294 aa).

8–15 (GLSGAGKT) is an ATP binding site. GTP is bound at residue 59 to 62 (DIRG).

This sequence belongs to the RapZ-like family.

Displays ATPase and GTPase activities. This Clostridium acetobutylicum (strain ATCC 824 / DSM 792 / JCM 1419 / IAM 19013 / LMG 5710 / NBRC 13948 / NRRL B-527 / VKM B-1787 / 2291 / W) protein is Nucleotide-binding protein CA_C0511.